We begin with the raw amino-acid sequence, 196 residues long: Glycerol-3-phosphate acyltransferase (196 aa).

5 consecutive transmembrane segments (helical) span residues 4 to 24 (FYIMLLAAYLIGAIPTGVVLT), 53 to 73 (LGVLTLIGDALKGAVPVLIAI), 78 to 98 (LGDAQVGAVAAAAFIGHCYPV), 114 to 134 (IFLVLSPLAVLGAFAVFALLV), and 140 to 160 (VSLGSICAAAAIPILVYFTEG).

Belongs to the PlsY family. In terms of assembly, probably interacts with PlsX.

It is found in the cell inner membrane. The enzyme catalyses an acyl phosphate + sn-glycerol 3-phosphate = a 1-acyl-sn-glycero-3-phosphate + phosphate. It functions in the pathway lipid metabolism; phospholipid metabolism. In terms of biological role, catalyzes the transfer of an acyl group from acyl-phosphate (acyl-PO(4)) to glycerol-3-phosphate (G3P) to form lysophosphatidic acid (LPA). This enzyme utilizes acyl-phosphate as fatty acyl donor, but not acyl-CoA or acyl-ACP. The chain is Glycerol-3-phosphate acyltransferase from Syntrophotalea carbinolica (strain DSM 2380 / NBRC 103641 / GraBd1) (Pelobacter carbinolicus).